A 276-amino-acid chain; its full sequence is Proteasome chaperone 1 (276 aa).

Belongs to the PSMG1 family. Component of the 20S proteasome chaperone. Forms a heterodimer with ADD66 that binds to proteasome precursors.

The protein resides in the cytoplasm. Involved in 20S proteasome assembly. This is Proteasome chaperone 1 (PBA1) from Saccharomyces cerevisiae (strain ATCC 204508 / S288c) (Baker's yeast).